The following is a 70-amino-acid chain: MVKRSILLLIKVYQYFISPLTGPTCRFYPTCSQYAFEAVMIHGSLKGSCLAVRRILKCHPFHPGGYDPVP.

Belongs to the UPF0161 family.

The protein localises to the cell inner membrane. Functionally, could be involved in insertion of integral membrane proteins into the membrane. The protein is Putative membrane protein insertion efficiency factor of Desulforapulum autotrophicum (strain ATCC 43914 / DSM 3382 / VKM B-1955 / HRM2) (Desulfobacterium autotrophicum).